The chain runs to 23 residues: uncharacterized protein (23 aa).

Residues 3–23 (YFFMGISFMVIVWAGTFALMI) form a helical membrane-spanning segment.

It localises to the cell inner membrane. This is an uncharacterized protein from Escherichia coli (strain K12).